A 118-amino-acid polypeptide reads, in one-letter code: Holo-[acyl-carrier-protein] synthase (118 aa).

Mg(2+) is bound by residues D8 and E50.

It belongs to the P-Pant transferase superfamily. AcpS family. It depends on Mg(2+) as a cofactor.

It localises to the cytoplasm. The catalysed reaction is apo-[ACP] + CoA = holo-[ACP] + adenosine 3',5'-bisphosphate + H(+). Its function is as follows. Transfers the 4'-phosphopantetheine moiety from coenzyme A to a Ser of acyl-carrier-protein. The polypeptide is Holo-[acyl-carrier-protein] synthase (Leifsonia xyli subsp. xyli (strain CTCB07)).